We begin with the raw amino-acid sequence, 382 residues long: MANNSNSGSELEVDDTLQSICYNRGSLKLLDQRKLPLETEFLDIRNSSDGWSAIREMVVRGAPAIAIAAALSLAVEVFNFDDFTGTSNDAASFLFKKLEYLVSSRPTAVNLSDAANKLKEVIYKAAATASDSNSVFQAYIEAAEIMLKDDIASNKAIGSHGASFIQNQLKNPQRLSILTHCNTGSLATAGYGTALGVIRALHAAGVLRRAYCTETRPFNQGSRLTAFELVHEKIPATLVADSAAAALMKDDQVSAVIVGADRVAANGDTANKIGTYSLALCAMHHNIPFYVAAPLTSVDLSLSSGKHIVIEERSPKELLNSRGGLGEQVAASGISVWNPAFDVTPANLISGIITEKGVITKIDSSDFDIKNFVKRTAGQSVA.

Asp-261 acts as the Proton donor in catalysis.

It belongs to the eIF-2B alpha/beta/delta subunits family. MtnA subfamily.

Its subcellular location is the cytoplasm. The protein resides in the nucleus. The catalysed reaction is 5-(methylsulfanyl)-alpha-D-ribose 1-phosphate = 5-(methylsulfanyl)-D-ribulose 1-phosphate. It participates in amino-acid biosynthesis; L-methionine biosynthesis via salvage pathway; L-methionine from S-methyl-5-thio-alpha-D-ribose 1-phosphate: step 1/6. Functionally, catalyzes the interconversion of methylthioribose-1-phosphate (MTR-1-P) into methylthioribulose-1-phosphate (MTRu-1-P). The chain is Methylthioribose-1-phosphate isomerase from Ricinus communis (Castor bean).